Here is a 177-residue protein sequence, read N- to C-terminus: Large ribosomal subunit protein uL6 (177 aa).

It belongs to the universal ribosomal protein uL6 family. As to quaternary structure, part of the 50S ribosomal subunit.

Its function is as follows. This protein binds to the 23S rRNA, and is important in its secondary structure. It is located near the subunit interface in the base of the L7/L12 stalk, and near the tRNA binding site of the peptidyltransferase center. The polypeptide is Large ribosomal subunit protein uL6 (Rhizobium etli (strain CIAT 652)).